The following is a 698-amino-acid chain: Vertnin (698 aa).

This sequence belongs to the vertnin family.

The protein localises to the nucleus. In terms of biological role, acts as a transcription factor that regulates development of thoracic vertebrae. This chain is Vertnin (VRTN), found in Sus scrofa (Pig).